The primary structure comprises 98 residues: Acylphosphatase (98 aa).

The Acylphosphatase-like domain maps to 12–98; it reads RLSAWVHGHV…DATMTGFSER (87 aa). Catalysis depends on residues arginine 27 and asparagine 45.

It belongs to the acylphosphatase family.

The enzyme catalyses an acyl phosphate + H2O = a carboxylate + phosphate + H(+). This Mycolicibacterium smegmatis (strain ATCC 700084 / mc(2)155) (Mycobacterium smegmatis) protein is Acylphosphatase (acyP).